A 375-amino-acid polypeptide reads, in one-letter code: MGNHRSDLKATRRWVVKVGSALLTANGRGLDTGCIQELASHIARLRNKGYTIVLVSSGSVAAGMERLGWRRRPRALYELQAAAAVGQMGLIQAYESEFQHHNQHTAQILLTHEDLANRSRYLNARSTLRTLLRLGVVPIVNENDTVATEEIRFGDNDTLSALVANLVEAELLVILTDQEGLFDADPRHYPNASFISEAAANKTELDGMANSRAGALGRGGMITKIRAARRAARSGAITVIASGKEPKILQRIASGETVGTLLWPDRQPLAARKQWLAGQLQTKGRLWLDTGAVKVVREAGRSLLPIGVLACEGNFARGEVVSCLDSDAREIACGLVNYNAEETRRILGHSSHQIEQILGYVDEEELIHRDNLVLL.

Lys-17 lines the ATP pocket. Substrate contacts are provided by Ser-57, Asp-144, and Asn-156. 176–177 (TD) provides a ligand contact to ATP. The PUA domain occupies 283 to 361 (KGRLWLDTGA…HQIEQILGYV (79 aa)).

The protein belongs to the glutamate 5-kinase family.

The protein resides in the cytoplasm. The catalysed reaction is L-glutamate + ATP = L-glutamyl 5-phosphate + ADP. Its pathway is amino-acid biosynthesis; L-proline biosynthesis; L-glutamate 5-semialdehyde from L-glutamate: step 1/2. Catalyzes the transfer of a phosphate group to glutamate to form L-glutamate 5-phosphate. This Nitrosococcus oceani (strain ATCC 19707 / BCRC 17464 / JCM 30415 / NCIMB 11848 / C-107) protein is Glutamate 5-kinase.